Consider the following 172-residue polypeptide: Diphosphoinositol polyphosphate phosphohydrolase 1 (172 aa).

Position 1 is an N-acetylmethionine (M1). Substrate-binding positions include R10, 18–20, and 39–41; these read KKR and SSR. The Nudix hydrolase domain maps to 17–142; that stretch reads YKKRAACLCF…KPVQASYFET (126 aa). Mg(2+) contacts are provided by G50 and E66. A Nudix box motif is present at residues 51–72; that stretch reads GGMEPEEEPSVAAVREVCEEAG. E69 acts as the Proton acceptor in catalysis. E70 serves as a coordination point for Mg(2+). Residues 89–91, R115, and K133 contribute to the substrate site; that span reads RKH.

It belongs to the Nudix hydrolase family. DIPP subfamily. In terms of assembly, monomer. It depends on Mg(2+) as a cofactor. The cofactor is Mn(2+). Requires Zn(2+) as cofactor. As to expression, widely expressed. Expressed at higher level in brain, heart, pancreas and liver. Also expressed in placenta, lung and kidney.

Its subcellular location is the cytoplasm. The protein resides in the nucleus. The catalysed reaction is diphospho-myo-inositol polyphosphate + H2O = myo-inositol polyphosphate + phosphate.. It carries out the reaction 5-diphospho-1D-myo-inositol 1,2,3,4,6-pentakisphosphate + H2O = 1D-myo-inositol hexakisphosphate + phosphate + H(+). It catalyses the reaction 3,5-bis(diphospho)-1D-myo-inositol 1,2,4,6-tetrakisphosphate + H2O = 3-diphospho-1D-myo-inositol 1,2,4,5,6-pentakisphosphate + phosphate + 2 H(+). The enzyme catalyses [phosphate](n+1) + n H2O = (n+1) phosphate + n H(+). The catalysed reaction is P(1),P(5)-bis(5'-adenosyl) pentaphosphate + H2O = ADP + ATP + 2 H(+). It carries out the reaction P(1),P(6)-bis(5'-adenosyl) hexaphosphate + H2O = 2 ATP + 2 H(+). It catalyses the reaction P(1),P(4)-bis(5'-adenosyl) tetraphosphate + H2O = AMP + ATP + 2 H(+). The enzyme catalyses a 5'-end (N(7)-methyl 5'-triphosphoguanosine)-ribonucleoside in mRNA + H2O = N(7)-methyl-GMP + a 5'-end diphospho-ribonucleoside in mRNA + 2 H(+). The catalysed reaction is a 5'-end (N(7)-methyl 5'-triphosphoguanosine)-ribonucleoside in mRNA + H2O = N(7)-methyl-GDP + a 5'-end phospho-ribonucleoside in mRNA + 2 H(+). Its activity is regulated as follows. Endopolyphospahatase activity is inhibited by NaF, NaPPi, beta-glycerol phosphate and heparin. 5-diphosphoinositol pentakisphosphate (5-InsP7) inhibits its mRNA decapping activity. In terms of biological role, cleaves a beta-phosphate from the diphosphate groups in PP-InsP5 (diphosphoinositol pentakisphosphate) and [PP]2-InsP4 (bisdiphosphoinositol tetrakisphosphate), suggesting that it may play a role in signal transduction. InsP6 (inositol hexakisphosphate) is not a substrate. Acts as a negative regulator of the ERK1/2 pathway. Also able to catalyze the hydrolysis of dinucleoside oligophosphates, with diadenosine 5',5'''-P1,P6-hexaphosphate (Ap6A) and diadenosine 5',5'''- P1,P5-pentaphosphate (Ap5A) being the preferred substrates. The major reaction products are ADP and p4a from Ap6A and ADP and ATP from Ap5A. Also able to hydrolyze 5-phosphoribose 1-diphosphate. Acts as a decapping enzyme that modulates the stability of a subset of mRNAs implicated in cell motility. Hydrolyzes monomethylated capped RNA after both the alpha- and beta-phosphates generating m7GMP + ppRNA and m7GDP + pRNA. Can hydrolyze unmethylated capped RNAs. Divalent cations zinc, magnesium and manganese determine its substrate specificity. Exhibits diphosphoinositol polyphosphate phosphohydrolase in the presence of magnesium ions, diadenosine hexaphosphate hydrolase activity in the presence of manganese ions and endopolyphosphatase activity in the presence of zinc ions. Plays an important role in limiting DNA damage and maintaining cell survival upon oxidative stress via its endopolyphosphatase activity. In Homo sapiens (Human), this protein is Diphosphoinositol polyphosphate phosphohydrolase 1.